A 437-amino-acid polypeptide reads, in one-letter code: MQVSVENTSALERRMTIAVPAERVENEVNKRLQQTAKRAKVAGFRPGKVPMSVIRQRFEADARQEAFGDLVQASFYEAIVEQKLNPAGAPAVEPKSFEKGKDLEFVAIFEVFPEFAVAGLESISVERLSAEVTDADLDNMLEVLRKQNVRFEAVERAAEKDDQVNIDFVGKIDGEAFAGGSAKGTQLVLGSGRMIPGFEDGLVGAKAGEERVVNVTFPEDYQNLDLAGKAAEFTITVNSVSAPQLPELNEEFFAQFGIKESTLEGFRAEVRKNMERELRQAIKTKVKNQVMDGLLAANPIEVPKALLENEVNRLRVQAVQQFGGNIKPEQLPAELFEEQAKRRVVLGLIVAEVVKQFELKPDEGKVREMIEEMASAYQEPEQVIAWYLKNDQQMNEVRSVVLEEQVVDTVLQKATVTDKSVSYEEAVKPAQAPAEAE.

The PPIase FKBP-type domain occupies 161–246; sequence DDQVNIDFVG…VNSVSAPQLP (86 aa).

Belongs to the FKBP-type PPIase family. Tig subfamily.

It localises to the cytoplasm. The catalysed reaction is [protein]-peptidylproline (omega=180) = [protein]-peptidylproline (omega=0). Functionally, involved in protein export. Acts as a chaperone by maintaining the newly synthesized protein in an open conformation. Functions as a peptidyl-prolyl cis-trans isomerase. In Pseudomonas putida (strain W619), this protein is Trigger factor.